The chain runs to 84 residues: Small ribosomal subunit protein bS16 (84 aa).

Belongs to the bacterial ribosomal protein bS16 family.

This is Small ribosomal subunit protein bS16 from Paraburkholderia phymatum (strain DSM 17167 / CIP 108236 / LMG 21445 / STM815) (Burkholderia phymatum).